A 658-amino-acid polypeptide reads, in one-letter code: Protein teflon (658 aa).

The C2H2-type 1 zinc-finger motif lies at 33-56 (LYCHFCRDLFTQLPEFLRHLQSNH). Residues 80-131 (DKAHEDAQSAGHNSSSGDSRSLMNSEDSRAIDGSEENSDNSPVKPEQIGKQN) form a disordered region. Residues 89-104 (AGHNSSSGDSRSLMNS) are compositionally biased toward polar residues. C2H2-type zinc fingers lie at residues 608–630 (YFCKWCDDIFILKKEYLKHLISH) and 634–657 (FQCTKCIKVFKYKGYYEKHLRNAH).

It belongs to the Teflon family.

It localises to the nucleus. The protein resides in the chromosome. Its function is as follows. Specifically required in males for proper segregation of autosomal bivalents at meiosis I. Expression is required in the male germ line prior to spermatocyte stage S4. May have a role as a bridging molecule maintaining adhesion to hold autosome bivalents together via heterochromatic connections. This Drosophila simulans (Fruit fly) protein is Protein teflon.